Consider the following 567-residue polypeptide: Proline--tRNA ligase (567 aa).

This sequence belongs to the class-II aminoacyl-tRNA synthetase family. ProS type 1 subfamily. In terms of assembly, homodimer.

Its subcellular location is the cytoplasm. The catalysed reaction is tRNA(Pro) + L-proline + ATP = L-prolyl-tRNA(Pro) + AMP + diphosphate. In terms of biological role, catalyzes the attachment of proline to tRNA(Pro) in a two-step reaction: proline is first activated by ATP to form Pro-AMP and then transferred to the acceptor end of tRNA(Pro). As ProRS can inadvertently accommodate and process non-cognate amino acids such as alanine and cysteine, to avoid such errors it has two additional distinct editing activities against alanine. One activity is designated as 'pretransfer' editing and involves the tRNA(Pro)-independent hydrolysis of activated Ala-AMP. The other activity is designated 'posttransfer' editing and involves deacylation of mischarged Ala-tRNA(Pro). The misacylated Cys-tRNA(Pro) is not edited by ProRS. This chain is Proline--tRNA ligase, found in Streptomyces griseus subsp. griseus (strain JCM 4626 / CBS 651.72 / NBRC 13350 / KCC S-0626 / ISP 5235).